The chain runs to 293 residues: 33 kDa chaperonin (293 aa).

Cystine bridges form between Cys237/Cys239 and Cys271/Cys274.

It belongs to the HSP33 family. Post-translationally, under oxidizing conditions two disulfide bonds are formed involving the reactive cysteines. Under reducing conditions zinc is bound to the reactive cysteines and the protein is inactive.

It localises to the cytoplasm. Functionally, redox regulated molecular chaperone. Protects both thermally unfolding and oxidatively damaged proteins from irreversible aggregation. Plays an important role in the bacterial defense system toward oxidative stress. The sequence is that of 33 kDa chaperonin from Haemophilus influenzae (strain ATCC 51907 / DSM 11121 / KW20 / Rd).